The following is a 487-amino-acid chain: NADH-quinone oxidoreductase subunit N (487 aa).

A run of 14 helical transmembrane segments spans residues 8–28 (LIAM…MLSI), 35–55 (FINA…LYFV), 78–98 (GLVI…LVGY), 104–124 (EFYL…SANH), 125–145 (LASL…LIGY), 159–179 (YMLL…LLYA), 203–223 (ILAG…LVPF), 235–255 (PAPV…AVVM), 271–291 (LVLS…AISQ), 297–317 (LLGY…VAVQ), 328–348 (IGVY…VVSL), 376–396 (AVMT…GFIG), 409–428 (LWWL…YYYL), and 451–471 (ALTA…VLGI).

It belongs to the complex I subunit 2 family. In terms of assembly, NDH-1 is composed of 13 different subunits. Subunits NuoA, H, J, K, L, M, N constitute the membrane sector of the complex.

The protein localises to the cell inner membrane. The enzyme catalyses a quinone + NADH + 5 H(+)(in) = a quinol + NAD(+) + 4 H(+)(out). NDH-1 shuttles electrons from NADH, via FMN and iron-sulfur (Fe-S) centers, to quinones in the respiratory chain. The immediate electron acceptor for the enzyme in this species is believed to be ubiquinone. Couples the redox reaction to proton translocation (for every two electrons transferred, four hydrogen ions are translocated across the cytoplasmic membrane), and thus conserves the redox energy in a proton gradient. The polypeptide is NADH-quinone oxidoreductase subunit N (Yersinia pseudotuberculosis serotype O:1b (strain IP 31758)).